The primary structure comprises 159 residues: SsrA-binding protein (159 aa).

The tract at residues 137-159 (KRQTEKERDWEREKQRLFQRDQR) is disordered.

The protein belongs to the SmpB family.

The protein localises to the cytoplasm. Its function is as follows. Required for rescue of stalled ribosomes mediated by trans-translation. Binds to transfer-messenger RNA (tmRNA), required for stable association of tmRNA with ribosomes. tmRNA and SmpB together mimic tRNA shape, replacing the anticodon stem-loop with SmpB. tmRNA is encoded by the ssrA gene; the 2 termini fold to resemble tRNA(Ala) and it encodes a 'tag peptide', a short internal open reading frame. During trans-translation Ala-aminoacylated tmRNA acts like a tRNA, entering the A-site of stalled ribosomes, displacing the stalled mRNA. The ribosome then switches to translate the ORF on the tmRNA; the nascent peptide is terminated with the 'tag peptide' encoded by the tmRNA and targeted for degradation. The ribosome is freed to recommence translation, which seems to be the essential function of trans-translation. The protein is SsrA-binding protein of Cellvibrio japonicus (strain Ueda107) (Pseudomonas fluorescens subsp. cellulosa).